The following is a 507-amino-acid chain: Histidine ammonia-lyase (507 aa).

The segment at residues 141 to 143 (ASG) is a cross-link (5-imidazolinone (Ala-Gly)). At serine 142 the chain carries 2,3-didehydroalanine (Ser).

It belongs to the PAL/histidase family. In terms of processing, contains an active site 4-methylidene-imidazol-5-one (MIO), which is formed autocatalytically by cyclization and dehydration of residues Ala-Ser-Gly.

Its subcellular location is the cytoplasm. The catalysed reaction is L-histidine = trans-urocanate + NH4(+). Its pathway is amino-acid degradation; L-histidine degradation into L-glutamate; N-formimidoyl-L-glutamate from L-histidine: step 1/3. This chain is Histidine ammonia-lyase, found in Cereibacter sphaeroides (strain ATCC 17029 / ATH 2.4.9) (Rhodobacter sphaeroides).